Reading from the N-terminus, the 361-residue chain is MLLWLTEILSQYFSSLTVFQYLTLRAILGILTALLISLVIGPVMIRKLSQYQIGQAVRDDGPQTHLSKAGTPTMGGALILVAIAISTLLWADLTNRYVWVVLLVTLLFGAIGWVDDYRKVVERNPRGLPARWKYFWQSVIGATAAIVLYVTASMPQETSLYLPFLKNVSLTLGPVLFILLTYFVIVGSSNAVNLTDGLDGLAIMPTVMVAGALAIFAYLSGHAQFANYLLIPHLPGTGELIIFCGALVGAGLGFLWFNTYPAQVFMGDVGALALGAALGTVAVIVRQEIVLFIMGGVFVMETISVILQVASFRLTGRRIFRMAPLHHHFELKGWPEPRVIVRFWVVTVVLVLIGLASLKIR.

The next 10 membrane-spanning stretches (helical) occupy residues 26-46, 73-93, 97-117, 134-154, 168-188, 200-220, 237-257, 264-284, 289-309, and 340-360; these read AILG…VMIR, TMGG…WADL, YVWV…VDDY, YFWQ…TASM, VSLT…IVGS, GLAI…AYLS, TGEL…FLWF, VFMG…VAVI, IVLF…ILQV, and IVRF…SLKI.

This sequence belongs to the glycosyltransferase 4 family. MraY subfamily. Mg(2+) serves as cofactor.

Its subcellular location is the cell inner membrane. It catalyses the reaction UDP-N-acetyl-alpha-D-muramoyl-L-alanyl-gamma-D-glutamyl-meso-2,6-diaminopimeloyl-D-alanyl-D-alanine + di-trans,octa-cis-undecaprenyl phosphate = di-trans,octa-cis-undecaprenyl diphospho-N-acetyl-alpha-D-muramoyl-L-alanyl-D-glutamyl-meso-2,6-diaminopimeloyl-D-alanyl-D-alanine + UMP. It functions in the pathway cell wall biogenesis; peptidoglycan biosynthesis. Its function is as follows. Catalyzes the initial step of the lipid cycle reactions in the biosynthesis of the cell wall peptidoglycan: transfers peptidoglycan precursor phospho-MurNAc-pentapeptide from UDP-MurNAc-pentapeptide onto the lipid carrier undecaprenyl phosphate, yielding undecaprenyl-pyrophosphoryl-MurNAc-pentapeptide, known as lipid I. This is Phospho-N-acetylmuramoyl-pentapeptide-transferase from Marinobacter nauticus (strain ATCC 700491 / DSM 11845 / VT8) (Marinobacter aquaeolei).